Here is a 249-residue protein sequence, read N- to C-terminus: MLKKIKISLILALGLTSLQAFGQENPDVKIEKLKDNLYVYTTYNTFNGTKYAANAVYLVTDKGVVVIDCPWGEDKFKSFTDEIYKKHGKKVIMNIATHSHDDRAGGLEYFGKIGAKTYSTKMTDSILAKENKPRAQYTFDNNKSFKVGKSEFQVYYPGKGHTADNVVVWFPKEKVLVGGCIIKSADSKDLGYIGEAYVNDWTQSVHNIQQKFSGAQYVVAGHDDWKDQRSIQHTLDLINEYQQKQKASN.

Residues 1–22 form the signal peptide; the sequence is MLKKIKISLILALGLTSLQAFG. Residues H98, H100, D102, H161, and C180 each coordinate Zn(2+). K183 contacts substrate. Zn(2+) is bound at residue H222.

Belongs to the metallo-beta-lactamase superfamily. Class-B beta-lactamase family. As to quaternary structure, monomer. Requires Zn(2+) as cofactor.

The protein localises to the periplasm. It carries out the reaction a beta-lactam + H2O = a substituted beta-amino acid. Inhibited by chelating agents such as EDTA, 1-10 phenanthroline and pyridine-2,6-dicarboxylic acid. Its function is as follows. Confers resistance to the different beta-lactams antibiotics (penicillin, cephalosporin and carbapenem) via the hydrolysis of the beta-lactam ring. This is Metallo-beta-lactamase type 2 (blaB1) from Elizabethkingia meningoseptica (Chryseobacterium meningosepticum).